Here is a 490-residue protein sequence, read N- to C-terminus: GTPase Der (490 aa).

2 EngA-type G domains span residues proline 3–valine 166 and isoleucine 203–threonine 376. Residues glycine 9–serine 16, aspartate 56–isoleucine 60, asparagine 118–aspartate 121, glycine 209–serine 216, aspartate 256–valine 260, and asparagine 321–aspartate 324 contribute to the GTP site. A KH-like domain is found at arginine 377–glutamate 461.

The protein belongs to the TRAFAC class TrmE-Era-EngA-EngB-Septin-like GTPase superfamily. EngA (Der) GTPase family. In terms of assembly, associates with the 50S ribosomal subunit.

Functionally, GTPase that plays an essential role in the late steps of ribosome biogenesis. The polypeptide is GTPase Der (Salmonella enteritidis PT4 (strain P125109)).